The sequence spans 527 residues: Amine oxidase [flavin-containing] A (527 aa).

At Met-1 the chain carries N-acetylmethionine. Topologically, residues 1–497 are cytoplasmic; that stretch reads MERQEKANNA…RTFWERNLPS (497 aa). At Ser-383 the chain carries Phosphoserine. Cys-406 carries the post-translational modification S-8alpha-FAD cysteine. Residues 498–518 form a helical; Anchor for type IV membrane protein membrane-spanning segment; the sequence is VTGLLKIIGFSTSVTALWLAV. The Mitochondrial intermembrane segment spans residues 519 to 527; that stretch reads YKFRLLTRS. An interaction with membrane phospholipid headgroups region spans residues 520–522; sequence KFR.

It belongs to the flavin monoamine oxidase family. Monomer, homo- or heterodimer (containing two subunits of similar size). Each subunit contains a covalently bound flavin. Enzymatically active as monomer. The cofactor is FAD.

The protein resides in the mitochondrion outer membrane. The enzyme catalyses a secondary aliphatic amine + O2 + H2O = a primary amine + an aldehyde + H2O2. It catalyses the reaction a primary methyl amine + O2 + H2O = an aldehyde + H2O2 + NH4(+). The catalysed reaction is (R)-adrenaline + O2 + H2O = (R)-3,4-dihydroxymandelaldehyde + methylamine + H2O2. It carries out the reaction dopamine + O2 + H2O = 3,4-dihydroxyphenylacetaldehyde + H2O2 + NH4(+). The enzyme catalyses tyramine + O2 + H2O = (4-hydroxyphenyl)acetaldehyde + H2O2 + NH4(+). It catalyses the reaction (R)-noradrenaline + O2 + H2O = (R)-3,4-dihydroxymandelaldehyde + H2O2 + NH4(+). The catalysed reaction is serotonin + O2 + H2O = (5-hydroxyindol-3-yl)acetaldehyde + H2O2 + NH4(+). It carries out the reaction kynuramine + O2 + H2O = 3-(2-aminophenyl)-3-oxopropanal + H2O2 + NH4(+). The enzyme catalyses tryptamine + O2 + H2O = indole-3-acetaldehyde + H2O2 + NH4(+). It catalyses the reaction 2-phenylethylamine + O2 + H2O = 2-phenylacetaldehyde + H2O2 + NH4(+). Functionally, catalyzes the oxidative deamination of primary and some secondary amine such as neurotransmitters, with concomitant reduction of oxygen to hydrogen peroxide and has important functions in the metabolism of neuroactive and vasoactive amines in the central nervous system and peripheral tissues. Preferentially oxidizes serotonin. Also catalyzes the oxidative deamination of kynuramine to 3-(2-aminophenyl)-3-oxopropanal that can spontaneously condense to 4-hydroxyquinoline. The chain is Amine oxidase [flavin-containing] A from Sus scrofa (Pig).